The primary structure comprises 858 residues: Neural cell adhesion molecule 1 (858 aa).

Residues Met1–Ser19 form the signal peptide. 5 Ig-like C2-type domains span residues Leu20–Asn111, Gln116–Gln205, Pro212–His302, Pro309–Gln414, and Pro417–Glu502. The Extracellular segment spans residues Leu20–Thr721. Disulfide bonds link Cys41/Cys96 and Cys139/Cys189. Heparin-binding positions include Lys152–Arg156 and Lys161–Arg165. A glycan (N-linked (GlcNAc...) asparagine) is linked at Asn222. A disulfide bond links Cys235 and Cys288. 5 N-linked (GlcNAc...) asparagine glycosylation sites follow: Asn316, Asn348, Asn434, Asn460, and Asn489. Residues Cys330 and Cys396 are joined by a disulfide bond. Cys437 and Cys490 are joined by a disulfide. 2 Fibronectin type-III domains span residues Thr510–Val609 and Glu611–Pro706. A helical membrane pass occupies residues Gly722 to Met739. At Asp740 to Ala858 the chain is on the cytoplasmic side. The segment at Pro765–Ala858 is disordered. Composition is skewed to basic and acidic residues over residues Lys768–Pro809 and Glu817–Ala834. Phosphoserine is present on residues Ser780 and Ser784.

In terms of assembly, interacts with MDK. Found in a complex with SLC39A6, SLC39A10 and with NCAM1; this complex controls NCAM1 phosphorylation and integration into focal adhesion complexes during epithelial-tomesenchymal transition. Interacts with synaptic plasticity regulator PANTS. Polysialylated by ST8SIA2 and ST8SIA4. Polysialylation modulates cell interactions by confering both attractive and repulsive properties that are highly regulated by ST8SIA2 and ST8SIA4. Polysialylation is formed on a-2,3-linked sialic acid of core glycans.

It localises to the cell membrane. Functionally, this protein is a cell adhesion molecule involved in neuron-neuron adhesion, neurite fasciculation, outgrowth of neurites, etc. The polypeptide is Neural cell adhesion molecule 1 (Rattus norvegicus (Rat)).